Here is a 288-residue protein sequence, read N- to C-terminus: ATP synthase gamma chain (288 aa).

It belongs to the ATPase gamma chain family. F-type ATPases have 2 components, CF(1) - the catalytic core - and CF(0) - the membrane proton channel. CF(1) has five subunits: alpha(3), beta(3), gamma(1), delta(1), epsilon(1). CF(0) has three main subunits: a, b and c.

The protein localises to the cell inner membrane. Functionally, produces ATP from ADP in the presence of a proton gradient across the membrane. The gamma chain is believed to be important in regulating ATPase activity and the flow of protons through the CF(0) complex. This is ATP synthase gamma chain from Rickettsia felis (strain ATCC VR-1525 / URRWXCal2) (Rickettsia azadi).